The sequence spans 216 residues: Somatotropin (216 aa).

The signal sequence occupies residues 1–25; that stretch reads MAPGSWFSPLFITVITLGLQWPQEA. H46 provides a ligand contact to Zn(2+). Cysteines 78 and 189 form a disulfide. E198 contributes to the Zn(2+) binding site. Residues C206 and C214 are joined by a disulfide bond.

This sequence belongs to the somatotropin/prolactin family.

The protein localises to the secreted. Functionally, growth hormone plays an important role in growth control. This Anas platyrhynchos (Mallard) protein is Somatotropin (GH).